Consider the following 365-residue polypeptide: Aminomethyltransferase (365 aa).

It belongs to the GcvT family. As to quaternary structure, the glycine cleavage system is composed of four proteins: P, T, L and H.

The catalysed reaction is N(6)-[(R)-S(8)-aminomethyldihydrolipoyl]-L-lysyl-[protein] + (6S)-5,6,7,8-tetrahydrofolate = N(6)-[(R)-dihydrolipoyl]-L-lysyl-[protein] + (6R)-5,10-methylene-5,6,7,8-tetrahydrofolate + NH4(+). The glycine cleavage system catalyzes the degradation of glycine. The polypeptide is Aminomethyltransferase (Aeromonas salmonicida (strain A449)).